The sequence spans 365 residues: MSKKTVVVGLSGGVDSSVAALLLKQQGWNVIGLFMKNWEDDDTEEYCSSRQDLIDVMSVADKIGIDVEVVNFAAEYRERVFAEFLSEYQAGRTPNPDILCNSEIKFKAFLDHAMQLGAEKIATGHYAGVREFDGKFQLLKAEDGTKDQSYFLYRLNQAQLSKTLFPLADIYKRDVRKIAEAEGLHVAAKKDSTGICFIGERPFKDFLSRYLPPKKGEIRRLDDGKVMGEHDGLMFHTMGQRKGLHIGGIKEKGHPGGGDHDAWFVAGKDMEKNVLYVVQGHDHPALLKGDLVAEQLSWVSGNEPHTHWVYTAKPRYRTSDQPCEVERVDAESCEIRFAEPQWALTPGQSVVLYESRVCLGGGVIR.

ATP contacts are provided by residues 9–16 and Met-35; that span reads GLSGGVDS. The interval 95–97 is interaction with target base in tRNA; sequence NPD. Cys-100 acts as the Nucleophile in catalysis. Cysteines 100 and 196 form a disulfide. Gly-124 lines the ATP pocket. The interval 146 to 148 is interaction with tRNA; it reads KDQ. Cys-196 serves as the catalytic Cysteine persulfide intermediate. Positions 315–316 are interaction with tRNA; that stretch reads RY.

The protein belongs to the MnmA/TRMU family.

Its subcellular location is the cytoplasm. It catalyses the reaction S-sulfanyl-L-cysteinyl-[protein] + uridine(34) in tRNA + AH2 + ATP = 2-thiouridine(34) in tRNA + L-cysteinyl-[protein] + A + AMP + diphosphate + H(+). Its function is as follows. Catalyzes the 2-thiolation of uridine at the wobble position (U34) of tRNA, leading to the formation of s(2)U34. This chain is tRNA-specific 2-thiouridylase MnmA, found in Dechloromonas aromatica (strain RCB).